The chain runs to 493 residues: Glutamyl-tRNA(Gln) amidotransferase subunit A (493 aa).

Residues Lys79 and Ser159 each act as charge relay system in the active site. The active-site Acyl-ester intermediate is the Ser183.

This sequence belongs to the amidase family. GatA subfamily. As to quaternary structure, heterotrimer of A, B and C subunits.

The enzyme catalyses L-glutamyl-tRNA(Gln) + L-glutamine + ATP + H2O = L-glutaminyl-tRNA(Gln) + L-glutamate + ADP + phosphate + H(+). Functionally, allows the formation of correctly charged Gln-tRNA(Gln) through the transamidation of misacylated Glu-tRNA(Gln) in organisms which lack glutaminyl-tRNA synthetase. The reaction takes place in the presence of glutamine and ATP through an activated gamma-phospho-Glu-tRNA(Gln). The protein is Glutamyl-tRNA(Gln) amidotransferase subunit A of Agrobacterium fabrum (strain C58 / ATCC 33970) (Agrobacterium tumefaciens (strain C58)).